Reading from the N-terminus, the 317-residue chain is uncharacterized protein (317 aa).

This is an uncharacterized protein from Schizosaccharomyces pombe (strain 972 / ATCC 24843) (Fission yeast).